The primary structure comprises 1029 residues: mRNA 3'-end-processing protein rna14 (1029 aa).

Disordered stretches follow at residues 1 to 177 (MAEE…PDVS) and 225 to 251 (GNVQ…PHDR). A compositionally biased stretch (basic and acidic residues) spans 21 to 32 (VDYKAVEEHGAD). Composition is skewed to polar residues over residues 43 to 79 (KTLQ…NSVQ) and 104 to 119 (TSTM…QPKT). A compositionally biased stretch (acidic residues) spans 127–140 (VEDEDEDDAGDADY). The segment covering 153 to 175 (TVATNVPQQSVSGNENEASSTPD) has biased composition (polar residues). Low complexity predominate over residues 229-243 (DSATATPTPDSPSTS). HAT repeat units follow at residues 281 to 313 (NRFD…MESE), 315 to 346 (NDLY…YVRR), 357 to 392 (QARR…FIKS), 406 to 439 (QKMD…FEMG), 469 to 509 (ITRD…WEKG), and 521 to 553 (AFKG…FCFL). Disordered regions lie at residues 634–664 (TFAK…ESVK), 853–951 (TAVR…GSPA), and 996–1023 (IPLP…SPSL). The segment covering 894-908 (SPKRPLEDFDDDYNR) has biased composition (basic and acidic residues). Composition is skewed to polar residues over residues 932-949 (RSQL…SQGS) and 1006-1023 (GTTQ…SPSL).

The protein resides in the nucleus. The protein localises to the cytoplasm. Functionally, component of the cleavage factor IA (CFIA) complex, which is involved in the endonucleolytic cleavage during polyadenylation-dependent pre-mRNA 3'-end formation. This chain is mRNA 3'-end-processing protein rna14 (rna14), found in Aspergillus fumigatus (strain ATCC MYA-4609 / CBS 101355 / FGSC A1100 / Af293) (Neosartorya fumigata).